The chain runs to 319 residues: Cytochrome f (319 aa).

The signal sequence occupies residues 1-35; the sequence is MQKKDVCEYITKWVSVTISTLVTIGVLVFPLSSEA. 4 residues coordinate heme: Tyr36, Cys56, Cys59, and His60. The helical transmembrane segment at 285–305 threads the bilayer; the sequence is IQGLLVFFASVVLAQIFLVLK.

It belongs to the cytochrome f family. In terms of assembly, the 4 large subunits of the cytochrome b6-f complex are cytochrome b6, subunit IV (17 kDa polypeptide, petD), cytochrome f and the Rieske protein, while the 4 small subunits are PetG, PetL, PetM and PetN. The complex functions as a dimer. Heme is required as a cofactor.

It localises to the plastid. It is found in the chloroplast thylakoid membrane. In terms of biological role, component of the cytochrome b6-f complex, which mediates electron transfer between photosystem II (PSII) and photosystem I (PSI), cyclic electron flow around PSI, and state transitions. This chain is Cytochrome f, found in Zygnema circumcarinatum (Green alga).